Here is a 209-residue protein sequence, read N- to C-terminus: Thymidylate kinase (209 aa).

Position 11–18 (11–18) interacts with ATP; the sequence is GPDGAGKT.

This sequence belongs to the thymidylate kinase family.

The enzyme catalyses dTMP + ATP = dTDP + ADP. Its function is as follows. Phosphorylation of dTMP to form dTDP in both de novo and salvage pathways of dTTP synthesis. The protein is Thymidylate kinase of Streptococcus thermophilus (strain ATCC BAA-250 / LMG 18311).